The primary structure comprises 272 residues: 3-methyl-2-oxobutanoate hydroxymethyltransferase (272 aa).

Asp-42 and Asp-86 together coordinate Mg(2+). 3-methyl-2-oxobutanoate contacts are provided by residues 42-43, Asp-86, and Lys-116; that span reads DS. Mg(2+) is bound at residue Glu-118. Glu-185 (proton acceptor) is an active-site residue.

Belongs to the PanB family. Homodecamer; pentamer of dimers. The cofactor is Mg(2+).

The protein resides in the cytoplasm. It catalyses the reaction 3-methyl-2-oxobutanoate + (6R)-5,10-methylene-5,6,7,8-tetrahydrofolate + H2O = 2-dehydropantoate + (6S)-5,6,7,8-tetrahydrofolate. It functions in the pathway cofactor biosynthesis; (R)-pantothenate biosynthesis; (R)-pantoate from 3-methyl-2-oxobutanoate: step 1/2. In terms of biological role, catalyzes the reversible reaction in which hydroxymethyl group from 5,10-methylenetetrahydrofolate is transferred onto alpha-ketoisovalerate to form ketopantoate. This is 3-methyl-2-oxobutanoate hydroxymethyltransferase from Prochlorococcus marinus (strain MIT 9313).